A 152-amino-acid polypeptide reads, in one-letter code: Transcription factor ATOH7 (152 aa).

The 53-residue stretch at 40–92 folds into the bHLH domain; that stretch reads RRRLAANARERRRMQGLNTAFDRLRRVVPQWGQDKKLSKYETLQMALSYIMAL.

In terms of assembly, forms a heterodimer with TCF3 isoform E47; interaction may be required for DNA-binding in certain situations.

It is found in the nucleus. Its subcellular location is the perikaryon. It localises to the cell projection. The protein resides in the axon. Transcription factor that binds to DNA at the consensus sequence 5'-CAG[GC]TG-3'. Dimerization with TCF3 isoform E47 may be required in certain situations. Binds to gene promoters and enhancer elements, and thereby regulates a transcriptional program of retinal ganglion cell (RGC) determinant genes. Although the exact mechanism is not certain, retinal transcription regulation by ATOH7 has a role in RGC determination and survival, photoreceptor population development, targeting of RGC axons to the optic nerve and development of the retino-hypothalamic tract. Binds to its own promoter and enhancer sequences, suggesting autoregulation of ATOH7 transcription. Required for retinal circadian rhythm photoentrainment. Plays a role in brainstem auditory signaling and binaural processing. The polypeptide is Transcription factor ATOH7 (Homo sapiens (Human)).